Here is a 630-residue protein sequence, read N- to C-terminus: Lysophospholipase 3 (630 aa).

Residues 1–16 (MKALLSLLTAVAVATA) form the signal peptide. In terms of domain architecture, PLA2c spans 39–587 (SCPATRPSIR…KEYCWNGTVD (549 aa)). 15 N-linked (GlcNAc...) asparagine glycosylation sites follow: N56, N95, N164, N220, N283, N351, N390, N443, N456, N462, N493, N514, N542, N566, and N583. Residue N606 is the site of GPI-like-anchor amidated asparagine attachment. Residues 607–630 (AAYTQGVTWLVGILAVGVAMGMTA) constitute a propeptide, removed in mature form.

The protein belongs to the lysophospholipase family. The GPI-like anchor contains a phosphoceramide lipid group.

Its subcellular location is the cell membrane. It catalyses the reaction a 1-acyl-sn-glycero-3-phosphocholine + H2O = sn-glycerol 3-phosphocholine + a fatty acid + H(+). Its function is as follows. Catalyzes the release of fatty acids from lysophospholipids. The protein is Lysophospholipase 3 (plb3) of Aspergillus fumigatus (strain CBS 144.89 / FGSC A1163 / CEA10) (Neosartorya fumigata).